Here is a 561-residue protein sequence, read N- to C-terminus: Potassium-transporting ATPase potassium-binding subunit (561 aa).

12 helical membrane-spanning segments follow: residues 2-22, 65-85, 135-155, 177-197, 253-273, 280-300, 327-347, 353-373, 378-398, 413-433, 482-502, and 531-551; these read GLGLLQIGLTLCIVIAITPVL, YIRAILYTNLFMGILVYSLIH, ALGFLMFTSAATGLAVGIAFI, ILLPISVIGAIALVLLGVPQT, FIETIAMIAIPAAMIYTYGVF, AWLLFWMVFIVFVILVWVAAT, FGWAETALWAVMTTATMCGAV, ALMPQGLFATLFNLFLQIIWG, GTAYLFIYLILTVFLTGLMVG, IVLASLILLVHPIVVLIPSAI, LSTSLSILVGRYVPIIAMLLL, and AGIVLILGVLTFFPVLALGPI.

It belongs to the KdpA family. As to quaternary structure, the system is composed of three essential subunits: KdpA, KdpB and KdpC.

The protein resides in the cell membrane. In terms of biological role, part of the high-affinity ATP-driven potassium transport (or Kdp) system, which catalyzes the hydrolysis of ATP coupled with the electrogenic transport of potassium into the cytoplasm. This subunit binds the extracellular potassium ions and delivers the ions to the membrane domain of KdpB through an intramembrane tunnel. The chain is Potassium-transporting ATPase potassium-binding subunit from Anabaena sp. (strain L31).